Here is an 831-residue protein sequence, read N- to C-terminus: Probable beta-glucosidase H (831 aa).

N13 is a glycosylation site (N-linked (GlcNAc...) asparagine). D225 is a catalytic residue. In terms of domain architecture, PA14 spans 389–549; sequence RLLSNAVIHF…DAEEMINRAV (161 aa). 6 N-linked (GlcNAc...) asparagine glycosylation sites follow: N474, N514, N604, N629, N726, and N823.

The protein belongs to the glycosyl hydrolase 3 family.

The protein resides in the secreted. The catalysed reaction is Hydrolysis of terminal, non-reducing beta-D-glucosyl residues with release of beta-D-glucose.. Its pathway is glycan metabolism; cellulose degradation. Functionally, beta-glucosidases are one of a number of cellulolytic enzymes involved in the degradation of cellulosic biomass. Catalyzes the last step releasing glucose from the inhibitory cellobiose. This chain is Probable beta-glucosidase H (bglH), found in Emericella nidulans (strain FGSC A4 / ATCC 38163 / CBS 112.46 / NRRL 194 / M139) (Aspergillus nidulans).